We begin with the raw amino-acid sequence, 355 residues long: 3,4-dihydroxy-2-butanone 4-phosphate synthase (355 aa).

A DHBP synthase region spans residues M1 to N202. D-ribulose 5-phosphate contacts are provided by residues R27–E28, D32, R139–T143, and E163. E28 is a binding site for Mg(2+). H142 is a Mg(2+) binding site. The tract at residues F203 to V355 is GTP cyclohydrolase II-like.

This sequence in the N-terminal section; belongs to the DHBP synthase family. In the C-terminal section; belongs to the GTP cyclohydrolase II family. Requires Mg(2+) as cofactor. The cofactor is Mn(2+).

The catalysed reaction is D-ribulose 5-phosphate = (2S)-2-hydroxy-3-oxobutyl phosphate + formate + H(+). It functions in the pathway cofactor biosynthesis; riboflavin biosynthesis; 2-hydroxy-3-oxobutyl phosphate from D-ribulose 5-phosphate: step 1/1. In terms of biological role, catalyzes the conversion of D-ribulose 5-phosphate to formate and 3,4-dihydroxy-2-butanone 4-phosphate. The sequence is that of 3,4-dihydroxy-2-butanone 4-phosphate synthase (ribB) from Helicobacter hepaticus (strain ATCC 51449 / 3B1).